We begin with the raw amino-acid sequence, 291 residues long: MVTKRVQRMMFAAAACIPLLLGSAPLYAQTSAVQQKLAALEKSSGGRLGVALIDTADNTQVLYRGDERFPMCSTSKVMAAAAVLKQSETQKQLLNQPVEIKPADLVNYNPIAEKHVNGTMTLAELSAAALQYSDNTAMNKLIAQLGGPGGVTAFARAIGDETFRLDRTEPTLNTAIPGDPRDTTTPRAMAQTLRQLTLGHALGETQRAQLVTWLKGNTTGAASIRAGLPTSWTVGDKTGSGDYGTTNDIAVIWPQGRAPLVLVTYFTQPQQNAESRRDVLASAARIIAEGL.

The N-terminal stretch at 1 to 28 (MVTKRVQRMMFAAAACIPLLLGSAPLYA) is a signal peptide. Residue S73 is the Nucleophile; acyl-ester intermediate of the active site. A beta-lactam-binding residues include K76, S133, E169, and S240.

Belongs to the class-A beta-lactamase family. As to quaternary structure, monomer.

The protein localises to the secreted. The enzyme catalyses a beta-lactam + H2O = a substituted beta-amino acid. Inhibited by the beta-lactamase-blocking agents clavulanic acid, tazobactam and sulbactam. Extended-spectrum beta-lactamase (ESBL) which confers resistance to penicillins, as well as first, second, and third-generation cephalosporins. Has cefotaxime-hydrolyzing activity. The polypeptide is Beta-lactamase CTX-M-14 (Escherichia coli).